Here is an 80-residue protein sequence, read N- to C-terminus: Exodeoxyribonuclease 7 small subunit (80 aa).

Belongs to the XseB family. As to quaternary structure, heterooligomer composed of large and small subunits.

It is found in the cytoplasm. It catalyses the reaction Exonucleolytic cleavage in either 5'- to 3'- or 3'- to 5'-direction to yield nucleoside 5'-phosphates.. Bidirectionally degrades single-stranded DNA into large acid-insoluble oligonucleotides, which are then degraded further into small acid-soluble oligonucleotides. The chain is Exodeoxyribonuclease 7 small subunit from Pseudomonas fluorescens (strain Pf0-1).